An 833-amino-acid chain; its full sequence is Ventricular zone-expressed PH domain-containing protein 1 (833 aa).

2 interaction with TGFBR1 regions span residues 201 to 319 (AELL…LANM) and 663 to 833 (ESTF…TTYL). One can recognise a PH domain in the interval 716–819 (QPLIEGKLKE…WLQCINVALA (104 aa)).

The protein belongs to the MELT/VEPH family. In terms of assembly, interacts with TGFBR1. In terms of tissue distribution, specifically expressed in kidney and eye. In the eye, expressed in retinal pigmented epithelium but not in the neural retina.

It localises to the cell membrane. Interacts with TGF-beta receptor type-1 (TGFBR1) and inhibits dissociation of activated SMAD2 from TGFBR1, impeding its nuclear accumulation and resulting in impaired TGF-beta signaling. May also affect FOXO, Hippo and Wnt signaling. This Mus musculus (Mouse) protein is Ventricular zone-expressed PH domain-containing protein 1 (Veph1).